Reading from the N-terminus, the 1750-residue chain is Protein TIC 214 (1750 aa).

6 helical membrane passes run 12-32, 69-89, 97-117, 129-149, 177-197, and 216-236; these read KIINSVIVVGLYYGFMTALSI, FIMGQFIRLISIYYGPLYVAL, ILALPYLLIHLFWNTDKSFFA, LEIYCVFLNHFALQLLNSCIL, FAWFIGQLFILNCFELVLVWI, and IFVIFLNCIFGSLLFLLSIQC. The segment covering 260 to 277 has biased composition (basic and acidic residues); sequence RERLQKEEERGVEKKEQS. 5 disordered regions span residues 260 to 282, 617 to 638, 718 to 738, 1205 to 1225, and 1419 to 1512; these read RERLQKEEERGVEKKEQSTEEDP, ATTTNSKTNTTKDTNLETKKES, STDKKRGKTKKEEKRENKQRE, RNSRGNYRLSDSKKQNVPKPV, and ETDS…NKKE. The segment covering 617 to 629 has biased composition (low complexity); the sequence is ATTTNSKTNTTKD. A compositionally biased stretch (basic and acidic residues) spans 727 to 738; that stretch reads KKEEKRENKQRE. Basic and acidic residues predominate over residues 1420-1512; sequence TDSKQKSETD…TKSDKKNKKE (93 aa).

This sequence belongs to the TIC214 family. In terms of assembly, part of the Tic complex.

It localises to the plastid. It is found in the chloroplast inner membrane. Involved in protein precursor import into chloroplasts. May be part of an intermediate translocation complex acting as a protein-conducting channel at the inner envelope. In Cuscuta reflexa (Southern Asian dodder), this protein is Protein TIC 214.